Reading from the N-terminus, the 201-residue chain is Probable cobalt-precorrin-6B C(15)-methyltransferase (decarboxylating) (201 aa).

Residues Thr-28, 52–56 (GTGTG), Asp-76, and Ala-105 contribute to the S-adenosyl-L-methionine site.

It belongs to the methyltransferase superfamily. Archaeal-type CbiT family.

It carries out the reaction Co-precorrin-6B + S-adenosyl-L-methionine = Co-precorrin-7 + S-adenosyl-L-homocysteine + CO2. It functions in the pathway cofactor biosynthesis; adenosylcobalamin biosynthesis; cob(II)yrinate a,c-diamide from sirohydrochlorin (anaerobic route): step 8/10. Functionally, catalyzes the methylation of C-15 in cobalt-precorrin-6B followed by the decarboxylation of C-12 to form cobalt-precorrin-7. In Thermoplasma volcanium (strain ATCC 51530 / DSM 4299 / JCM 9571 / NBRC 15438 / GSS1), this protein is Probable cobalt-precorrin-6B C(15)-methyltransferase (decarboxylating).